Reading from the N-terminus, the 253-residue chain is Probable transcriptional regulatory protein SynRCC307_1833 (253 aa).

Belongs to the TACO1 family.

The protein localises to the cytoplasm. This chain is Probable transcriptional regulatory protein SynRCC307_1833, found in Synechococcus sp. (strain RCC307).